A 264-amino-acid polypeptide reads, in one-letter code: Major prion protein (264 aa).

Residues 1–24 (MVKSHIGSWILVLFVAMWSDVGLC) form the signal peptide. Residues 25–241 (KKRPKPGGGW…ESQAYYQRGA (217 aa)) are interaction with GRB2, ERI3 and SYN1. The interval 28–118 (PKPGGGWNTG…QWNKPSKPKT (91 aa)) is disordered. Residues 37–54 (GGSRYPGPGSPGGNRYPP) are compositionally biased toward low complexity. Tandem repeats lie at residues 54 to 62 (PQGGGGWGQ), 63 to 70 (PHGGGWGQ), 71 to 78 (PHGGGWGQ), 79 to 86 (PHGGGWGQ), 87 to 94 (PHGGGWGQ), and 95 to 103 (PHGGGGWGQ). Residues 54 to 103 (PQGGGGWGQPHGGGWGQPHGGGWGQPHGGGWGQPHGGGWGQPHGGGGWGQ) form a 6 X 8 AA tandem repeats of P-H-G-G-G-W-G-Q region. Positions 55-107 (QGGGGWGQPHGGGWGQPHGGGWGQPHGGGWGQPHGGGWGQPHGGGGWGQGGTH) are enriched in gly residues. Cu(2+)-binding residues include histidine 72, glycine 73, glycine 74, histidine 80, glycine 81, glycine 82, histidine 88, glycine 89, glycine 90, histidine 96, and glycine 98. Cysteines 190 and 225 form a disulfide. Residues asparagine 192 and asparagine 208 are each glycosylated (N-linked (GlcNAc...) asparagine). A lipid anchor (GPI-anchor amidated alanine) is attached at alanine 241. A propeptide spans 242 to 264 (SVILFSSPPVILLISFLIFLIVG) (removed in mature form).

Belongs to the prion family. Monomer and homodimer. Has a tendency to aggregate into amyloid fibrils containing a cross-beta spine, formed by a steric zipper of superposed beta-strands. Soluble oligomers may represent an intermediate stage on the path to fibril formation. Copper binding may promote oligomerization. Interacts with GRB2, APP, ERI3/PRNPIP and SYN1. Mislocalized cytosolically exposed PrP interacts with MGRN1; this interaction alters MGRN1 subcellular location and causes lysosomal enlargement. Interacts with KIAA1191.

It is found in the cell membrane. It localises to the golgi apparatus. Its primary physiological function is unclear. Has cytoprotective activity against internal or environmental stresses. May play a role in neuronal development and synaptic plasticity. May be required for neuronal myelin sheath maintenance. May play a role in iron uptake and iron homeostasis. Soluble oligomers are toxic to cultured neuroblastoma cells and induce apoptosis (in vitro). Association with GPC1 (via its heparan sulfate chains) targets PRNP to lipid rafts. Also provides Cu(2+) or Zn(2+) for the ascorbate-mediated GPC1 deaminase degradation of its heparan sulfate side chains. The sequence is that of Major prion protein (PRNP) from Ailuropoda melanoleuca (Giant panda).